A 368-amino-acid polypeptide reads, in one-letter code: Proline-rich protein 5-like (368 aa).

Position 28 is a phosphoserine (serine 28). Positions 327-368 (PSFPPPHRQCSSEPNITDNPDGLEEGARGSQEGSELNCASLS) are disordered. Polar residues-rich tracts occupy residues 335–344 (QCSSEPNITD) and 357–368 (QEGSELNCASLS).

Belongs to the PROTOR family. In terms of assembly, interacts with the mammalian target of rapamycin complex 2 (mTORC2) which contains MTOR, MLST8, PRR5, RICTOR, MAPKAP1 and DEPTOR. Interacts with RFFL. Interacts (via C-terminus) with ZFP36 (via C-terminus); this interaction may accelerate ZFP36-mediated mRNA decay during stress. Interacts with RICTOR. Ubiquitinated. Ubiquitination by RFFL promotes proteasomal degradation of PRR5L thereby modifying the substrate-specific activity of the mTORC2 complex. Ubiquitination by RFFL is stimulated by LPA/lysophosphatidic acid.

Its function is as follows. Associates with the mTORC2 complex that regulates cellular processes including survival and organization of the cytoskeleton. Regulates the activity of the mTORC2 complex in a substrate-specific manner preventing for instance the specific phosphorylation of PKCs and thereby controlling cell migration. Plays a role in the stimulation of ZFP36-mediated mRNA decay of several ZFP36-associated mRNAs, such as TNF-alpha and GM-CSF, in response to stress. Required for ZFP36 localization to cytoplasmic stress granule (SG) and P-body (PB) in response to stress. The protein is Proline-rich protein 5-like (PRR5L) of Homo sapiens (Human).